The sequence spans 301 residues: Sulfate adenylyltransferase subunit 2 (301 aa).

The protein belongs to the PAPS reductase family. CysD subfamily. In terms of assembly, heterodimer composed of CysD, the smaller subunit, and CysN.

It catalyses the reaction sulfate + ATP + H(+) = adenosine 5'-phosphosulfate + diphosphate. It functions in the pathway sulfur metabolism; hydrogen sulfide biosynthesis; sulfite from sulfate: step 1/3. Functionally, with CysN forms the ATP sulfurylase (ATPS) that catalyzes the adenylation of sulfate producing adenosine 5'-phosphosulfate (APS) and diphosphate, the first enzymatic step in sulfur assimilation pathway. APS synthesis involves the formation of a high-energy phosphoric-sulfuric acid anhydride bond driven by GTP hydrolysis by CysN coupled to ATP hydrolysis by CysD. The polypeptide is Sulfate adenylyltransferase subunit 2 (Trichlorobacter lovleyi (strain ATCC BAA-1151 / DSM 17278 / SZ) (Geobacter lovleyi)).